A 67-amino-acid polypeptide reads, in one-letter code: Probable Sec-independent protein translocase protein TatE (67 aa).

Residues 4–21 traverse the membrane as a helical segment; it reads ISITKLLVVAALVVLLFG.

Belongs to the TatA/E family. TatE subfamily.

It localises to the cell inner membrane. Its function is as follows. Part of the twin-arginine translocation (Tat) system that transports large folded proteins containing a characteristic twin-arginine motif in their signal peptide across membranes. TatE shares overlapping functions with TatA. The chain is Probable Sec-independent protein translocase protein TatE from Shigella flexneri.